A 320-amino-acid chain; its full sequence is MEKRNTYDWVTRWVIASFSILTISYMITWTSISNAYPIFAQKSYESPREATGRIVCANCHLAKKSVEIEVPQSVLPNSVFEAIVKIPYDTQIKQVLANGKKGGLNVGAVLILPEGFELAPSDRISPEIKQKIGNLNFQNYSPSQKNILVIGPIPGQKYREIVFPILSPDPATKKEVNFRKYPIYVGGNRGRGQVYPDGSKSNNTVYNASATGRVSQILRKDKGGYEVTIENISQGRSVVDIIPPGPELLVSEGDFVKVDQPLTNNPNVGGFGQVNAEIVLQDPFRIQGLLVFLASVVLAQIFLVLKKKQFEKVQLAEMNF.

Residues 1 to 35 form the signal peptide; sequence MEKRNTYDWVTRWVIASFSILTISYMITWTSISNA. The heme site is built by tyrosine 36, cysteine 56, cysteine 59, and histidine 60. Residues 286–306 traverse the membrane as a helical segment; it reads IQGLLVFLASVVLAQIFLVLK.

This sequence belongs to the cytochrome f family. As to quaternary structure, the 4 large subunits of the cytochrome b6-f complex are cytochrome b6, subunit IV (17 kDa polypeptide, petD), cytochrome f and the Rieske protein, while the 4 small subunits are PetG, PetL, PetM and PetN. The complex functions as a dimer. Heme is required as a cofactor.

The protein localises to the plastid. The protein resides in the chloroplast thylakoid membrane. Functionally, component of the cytochrome b6-f complex, which mediates electron transfer between photosystem II (PSII) and photosystem I (PSI), cyclic electron flow around PSI, and state transitions. The chain is Cytochrome f from Welwitschia mirabilis (Tree tumbo).